Consider the following 615-residue polypeptide: Matrix metalloproteinase-25 (615 aa).

Positions 1-162 (MCFPGSQISP…AAGLVRRRRR (162 aa)) are excised as a propeptide. The chain crosses the membrane as a helical span at residues 53–73 (ILRLPAFGLPLLALLLVPLLP). A Cysteine switch motif is present at residues 143–150 (PRCSLPDV). Positions 145 and 287 each coordinate Zn(2+). Glutamate 288 is a catalytic residue. Zn(2+) is bound by residues histidine 291 and histidine 297. The interval 336–366 (VSQNPNARPTRKPLVPPPQPPAMPPDSPATP) is disordered. Pro residues predominate over residues 349 to 366 (LVPPPQPPAMPPDSPATP). Hemopexin repeat units lie at residues 368–417 (PDRC…WEGL), 421–466 (VKVI…GLPP), 467–515 (GEDV…DGAP), and 516–562 (FAPD…WLDC). A disulfide bridge links cysteine 371 with cysteine 562. Positions 547-582 (AESDSPQPIGPKWLDCPAPNSDPRVTSPPKTTSKTR) are disordered. Residue alanine 593 is the site of GPI-anchor amidated alanine attachment. Residues 594–615 (SEQLSPLLLPLLPLVAGEVFSY) constitute a propeptide, removed in mature form.

The protein belongs to the peptidase M10A family. Zn(2+) is required as a cofactor. Ca(2+) serves as cofactor. In terms of processing, the precursor is cleaved by a furin endopeptidase.

It localises to the cell membrane. Its function is as follows. May activate progelatinase A. This is Matrix metalloproteinase-25 (Mmp25) from Mus musculus (Mouse).